Here is a 180-residue protein sequence, read N- to C-terminus: Secreted RxLR effector protein 5 (180 aa).

Residues 1 to 24 form the signal peptide; sequence MRFYYTLLATAAALLVHSDALSAA. The RxLR-dEER signature appears at 44-60; it reads RFLRRHTDSETTDNEER.

Belongs to the RxLR effector family.

The protein localises to the secreted. It is found in the host cell. In terms of biological role, secreted effector that partially suppresses elicitor-induced cell death in host and enhances virulence of P.parasitica. This is Secreted RxLR effector protein 5 from Phytophthora nicotianae (Potato buckeye rot agent).